We begin with the raw amino-acid sequence, 115 residues long: MKFVLLFGVFLVTLFSYSSAEMLDDFDQADEDELLSLIEKEEARAKECTPRFYDCSHDRHSCCRSELFKDVCTCFYPEGGDNEVCTCQQPKHLKYMEKAADKAKKFGGKIKRWFG.

An N-terminal signal peptide occupies residues Met1–Ala20. A propeptide spanning residues Glu21 to Arg44 is cleaved from the precursor. 4 disulfide bridges follow: Cys48–Cys63, Cys55–Cys72, Cys62–Cys87, and Cys74–Cys85.

Belongs to the neurotoxin 19 (CSTX) family. 01 subfamily. In terms of tissue distribution, expressed by the venom gland.

It localises to the secreted. This is U3-lycotoxin-Ls1h from Lycosa singoriensis (Wolf spider).